The sequence spans 422 residues: Glutamyl-tRNA reductase (422 aa).

Residues 49–52 (TCNR), S108, 113–115 (EPQ), and Q119 contribute to the substrate site. Residue C50 is the Nucleophile of the active site. Residue 188-193 (GAGQTI) coordinates NADP(+).

Belongs to the glutamyl-tRNA reductase family. Homodimer.

It carries out the reaction (S)-4-amino-5-oxopentanoate + tRNA(Glu) + NADP(+) = L-glutamyl-tRNA(Glu) + NADPH + H(+). The protein operates within porphyrin-containing compound metabolism; protoporphyrin-IX biosynthesis; 5-aminolevulinate from L-glutamyl-tRNA(Glu): step 1/2. Its function is as follows. Catalyzes the NADPH-dependent reduction of glutamyl-tRNA(Glu) to glutamate 1-semialdehyde (GSA). In Marinomonas sp. (strain MWYL1), this protein is Glutamyl-tRNA reductase.